The chain runs to 845 residues: Putative DEAD-box ATP-dependent RNA helicase 29 (845 aa).

A Q motif motif is present at residues 28-56; that stretch reads GGFESLNLGPNVFNAIKKKGYKVPTPIQR. One can recognise a Helicase ATP-binding domain in the interval 59-232; that stretch reads MPLILSGVDV…KAGLREPQLV (174 aa). Residue 72–79 participates in ATP binding; the sequence is ARTGSGKT. The short motif at 180–183 is the DEAD box element; that stretch reads DEAD. A Helicase C-terminal domain is found at 256–411; that stretch reads KYSALLYLVR…EVLKNMEEVM (156 aa). The disordered stretch occupies residues 675–845; that stretch reads SGKIKTESGA…GGGGKRGRGR (171 aa). Basic and acidic residues-rich tracts occupy residues 696–716 and 738–754; these read RWQERSHKKVSRDSGDADETT and VRSEIKDLDQVRKERQQ. Residues 770–799 show a composition bias toward gly residues; sequence GGRGGARGGRGGGARGGRGGSRDFGGGGRD. Residues 806-817 show a composition bias toward basic and acidic residues; it reads RGGRSGGRDFGG. A compositionally biased stretch (basic residues) spans 828–845; the sequence is GGKRGGGRGGGGKRGRGR.

Belongs to the DEAD box helicase family. DDX54/DBP10 subfamily.

It carries out the reaction ATP + H2O = ADP + phosphate + H(+). This is Putative DEAD-box ATP-dependent RNA helicase 29 (RH29) from Arabidopsis thaliana (Mouse-ear cress).